An 81-amino-acid polypeptide reads, in one-letter code: Antimicrobial peptide D2 (81 aa).

Residues 1–31 (MAKTVLGIHVTFLTLLFAVILLNDVMYTPVE) form the signal peptide. Disulfide bonds link C34–C81, C45–C66, C51–C75, and C55–C77.

In terms of biological role, antimicrobial peptide probably active against fungi like B.sorokiniana, F.oxysporum, F.graminearum, F.avenaceum, B.cinerea, P.beta, P.infestans and P.debaryanum. This Stellaria media (Common chickweed) protein is Antimicrobial peptide D2.